A 466-amino-acid chain; its full sequence is MIKVYNTLNKKKEEFIPLTPGEVKMYVCGPTVYNFFHIGNGRTFIVFDTIRRYFEYRGFKVDFVQNFTDIDDKMIKKANEEGTTVKKIGDTYIKEYYQDADALNIERATVNPRATEFIGEIIKFVKGLVDKGYAYEVDGDVYFSTKKFEGYGKLSGQNIEDLQSGARISVDERKKDPMDFAIWKAQKPGEPAWNSPWGMGRPGWHIECSCMAKKLLGETIDIHAGGSDLKFPHHENEIAQSEALTGEPFARYWLHSAFVNVNNEKMSKSLNNFFTAREILERYDADVIRFLMLSAHYRQQLNFSEDLLESAKASVERIYNAIGNLENLIDEVSREEMNEEEKAYLESLNKYKEKYIEKMDDDFNTADAITAIFDLIKDTNTNITIDSSKELAQKALELIRELGAPLGMFQKSTKGNLEEEIEALIAKRQQARKDRDFALADKIRDELKDRGIVLEDTPQGVRWKMI.

Zn(2+) is bound at residue C28. A 'HIGH' region motif is present at residues 30–40; sequence PTVYNFFHIGN. Zn(2+)-binding residues include C208, H233, and E237. The 'KMSKS' region signature appears at 265-269; the sequence is KMSKS. An ATP-binding site is contributed by K268.

The protein belongs to the class-I aminoacyl-tRNA synthetase family. In terms of assembly, monomer. Zn(2+) serves as cofactor.

It is found in the cytoplasm. It carries out the reaction tRNA(Cys) + L-cysteine + ATP = L-cysteinyl-tRNA(Cys) + AMP + diphosphate. In Clostridium perfringens (strain 13 / Type A), this protein is Cysteine--tRNA ligase.